The primary structure comprises 910 residues: MRRSAAPSQLQGNSFKKPKFIPPGRSNPGLNEEITKLNPDIKLFEGVAINNTFLPSQNDLRICSLNLPSEESTREINNRDNCSGKYCFEAPTLATLDPPHTVHSAPKEVAVSKEQEEKSDSLVKYFSVVWCKPSKKKHKKWEGDAVLIVKGKSFILKNLEGKDIGRGIGYKFKELEKIEEGQTLMICGKEIEVMGVISPDDFSSGRCFQLGGGSTAISHSSQVARKCFSNPFKSVCKPSSKENRQNDFQNCKPRHDPYTPNSLVMPRPDKNHQWVFNKNCFPLVDVVIDPYLVYHLRPHQKEGIIFLYECVMGMRMNGRCGAILADEMGLGKTLQCISLIWTLQCQGPYGGKPVIKKTLIVTPGSLVNNWKKEFQKWLGSERIKIFTVDQDHKVEEFIKSIFYSVLIISYEMLLRSLDQIKNIKFDLLICDEGHRLKNSAIKTTTALISLSCEKRIILTGTPIQNDLQEFFALIDFVNPGILGSLSSYRKIYEEPIILSREPSASEEEKELGERRAAELTCLTGLFILRRTQEIINKYLPPKIENVVFCRPGALQIELYRKLLNSQVVRFCLQGLLENSPHLICIGALKKLCNHPCLLFNSIKEKECSSTCDKNEEKSLYKGLLSVFPADYNPLLFTEKESGKLQVLSKLLAVIHELRPTEKVVLVSNYTQTLNILQEVCKRHGYAYTRLDGQTPISQRQQIVDGFNSQHSSFFIFLLSSKAGGVGLNLIGGSHLILYDIDWNPATDIQAMSRVWRDGQKYPVHIYRLLTTGTIEEKIYQRQISKQGLCGAVVDLTKTSEHIQFSVEELKNLFTLHESSDCVTHDLLDCECTGEEVHTGDSLEKFIVSRDCQLGPHHQKSNSLKPLSMSQLKQWKHFSGDHLNLTDPFLERITENVSFIFQNITTQATGT.

Residues 1–14 (MRRSAAPSQLQGNS) show a composition bias toward polar residues. The disordered stretch occupies residues 1-33 (MRRSAAPSQLQGNSFKKPKFIPPGRSNPGLNEE). S14 bears the Phosphoserine mark. The region spanning 313 to 480 (GMRMNGRCGA…FALIDFVNPG (168 aa)) is the Helicase ATP-binding domain. 326-333 (DEMGLGKT) contributes to the ATP binding site. Residues 431-434 (DEGH) carry the DEGH box motif. Residues 649–810 (KLLAVIHELR…HIQFSVEELK (162 aa)) form the Helicase C-terminal domain.

This sequence belongs to the SNF2/RAD54 helicase family. Interacts with RAD51 through the NH2-terminal domain. Immunoprecipitation experiments show that the interaction is constitutive and not induced by ionizing radiation. The interaction may be indirect. As to expression, abundantly expressed in testis and spleen. Relatively low levels observed in thymus, prostate, ovary and colon.

The protein localises to the nucleus. Its function is as follows. Involved in DNA repair and mitotic recombination. May play an active role in recombination processes in concert with other members of the RAD52 epistasis group. In Homo sapiens (Human), this protein is DNA repair and recombination protein RAD54B (RAD54B).